The following is a 78-amino-acid chain: Molt-inhibiting hormone (78 aa).

Disulfide bonds link Cys-7–Cys-44, Cys-24–Cys-40, and Cys-27–Cys-53.

The protein resides in the secreted. Inhibits Y-organs where molting hormone (ecdysteroid) is secreted. A molting cycle is initiated when MIH secretion diminishes or stops. Also has significant hyperglycemic hormone (CHH) activity. This Cancer pagurus (Rock crab) protein is Molt-inhibiting hormone.